A 571-amino-acid chain; its full sequence is Putative clathrin assembly protein At2g01600 (571 aa).

Positions 24 to 161 (RVNSEYADLD…ECFRVLKYDT (138 aa)) constitute an ENTH domain. Disordered stretches follow at residues 325–346 (YRPD…REML) and 474–571 (PAPN…TGLI). The span at 337–346 (EPSHEEREML) shows a compositional bias: basic and acidic residues. The segment covering 508 to 522 (QQTYQHQPQPTYQHQ) has biased composition (low complexity). Composition is skewed to polar residues over residues 523-532 (SNPPTNNSNP) and 543-571 (PVSQ…TGLI).

It is found in the membrane. The protein resides in the clathrin-coated pit. Its subcellular location is the golgi apparatus. The protein localises to the cytoplasmic vesicle. It localises to the clathrin-coated vesicle. The chain is Putative clathrin assembly protein At2g01600 from Arabidopsis thaliana (Mouse-ear cress).